Reading from the N-terminus, the 173-residue chain is Nicotinamide-nucleotide adenylyltransferase (173 aa).

This sequence belongs to the archaeal NMN adenylyltransferase family.

It is found in the cytoplasm. It catalyses the reaction beta-nicotinamide D-ribonucleotide + ATP + H(+) = diphosphate + NAD(+). Its pathway is cofactor biosynthesis; NAD(+) biosynthesis; NAD(+) from nicotinamide D-ribonucleotide: step 1/1. This is Nicotinamide-nucleotide adenylyltransferase from Methanosarcina acetivorans (strain ATCC 35395 / DSM 2834 / JCM 12185 / C2A).